A 105-amino-acid chain; its full sequence is MNDRPRPCSNPAMLKHNTYFEGGVQSVGFERNGRRHTVGVVDAGEFHFATDAAERMTVVSGELWAKLPGEAAFRPFASGTVFEVPAKSGFEVKALAPAAYLCEFL.

It belongs to the nucleoside phosphorylase PpnP family.

It catalyses the reaction a purine D-ribonucleoside + phosphate = a purine nucleobase + alpha-D-ribose 1-phosphate. The enzyme catalyses adenosine + phosphate = alpha-D-ribose 1-phosphate + adenine. It carries out the reaction cytidine + phosphate = cytosine + alpha-D-ribose 1-phosphate. The catalysed reaction is guanosine + phosphate = alpha-D-ribose 1-phosphate + guanine. It catalyses the reaction inosine + phosphate = alpha-D-ribose 1-phosphate + hypoxanthine. The enzyme catalyses thymidine + phosphate = 2-deoxy-alpha-D-ribose 1-phosphate + thymine. It carries out the reaction uridine + phosphate = alpha-D-ribose 1-phosphate + uracil. The catalysed reaction is xanthosine + phosphate = alpha-D-ribose 1-phosphate + xanthine. Its function is as follows. Catalyzes the phosphorolysis of diverse nucleosides, yielding D-ribose 1-phosphate and the respective free bases. Can use uridine, adenosine, guanosine, cytidine, thymidine, inosine and xanthosine as substrates. Also catalyzes the reverse reactions. The sequence is that of Pyrimidine/purine nucleoside phosphorylase from Anaeromyxobacter sp. (strain Fw109-5).